The primary structure comprises 1168 residues: Carboxylic acid reductase (1168 aa).

AMP-binding positions include His-290, Ser-385, 407-408, Thr-412, Asp-485, 497-500, Lys-506, and Lys-606; these read EG and YLDR. The region spanning 645–720 is the Carrier domain; that stretch reads APVLPTLCRA…ALADHIEAAR (76 aa). Ser-679 carries the O-(pantetheine 4'-phosphoryl)serine modification. NADP(+)-binding positions include 777-780, Arg-804, Arg-814, 844-845, 870-872, Ser-910, Tyr-946, and Lys-950; these read TGFL, DK, and PAA.

This sequence belongs to the ATP-dependent AMP-binding enzyme family. Carboxylic acid reductase subfamily. The cofactor is pantetheine 4'-phosphate.

The enzyme catalyses a carboxylate + ATP + NADPH + H(+) = an aldehyde + AMP + diphosphate + NADP(+). It catalyses the reaction a medium-chain fatty acid + ATP + H(+) = a medium-chain fatty acyl-AMP + diphosphate. The catalysed reaction is a long-chain fatty acid + ATP + H(+) = a long-chain fatty acyl-AMP + diphosphate. It carries out the reaction dodecanoate + ATP + H(+) = dodecanoyl-AMP + diphosphate. The enzyme catalyses hexadecanoate + ATP + H(+) = hexadecanoyl-AMP + diphosphate. Functionally, catalyzes the ATP- and NADPH-dependent reduction of carboxylic acids to the corresponding aldehydes. In vitro, also catalyzes the activation of medium/long-chain fatty acids as acyl-adenylates (acyl-AMP). The sequence is that of Carboxylic acid reductase from Mycobacterium tuberculosis (strain ATCC 25618 / H37Rv).